A 141-amino-acid chain; its full sequence is uncharacterized protein (141 aa).

Residues 114 to 134 (ILFTCYIQSFSLLISNFFIAI) traverse the membrane as a helical segment.

Its subcellular location is the membrane. This is an uncharacterized protein from Schizosaccharomyces pombe (strain 972 / ATCC 24843) (Fission yeast).